A 514-amino-acid polypeptide reads, in one-letter code: Probable drug/proton antiporter YHK8 (514 aa).

The Cytoplasmic portion of the chain corresponds to 1–74; that stretch reads MVAEFQIASA…RHMSTARRYY (74 aa). Residues 75 to 95 traverse the membrane as a helical segment; sequence ISSLITFTSMVITMISSSWTL. The Extracellular segment spans residues 96–111; that stretch reads PSTHIIEHFHISHEVS. The chain crosses the membrane as a helical span at residues 112–132; that stretch reads TLGITLYVFGLGIGPLFLSPL. The Cytoplasmic segment spans residues 133 to 141; it reads SELYGRRIT. The chain crosses the membrane as a helical span at residues 142–162; sequence FLYALTLSIIWQCLTIWSKTI. Topologically, residues 163 to 170 are extracellular; the sequence is TGVMFGRF. A helical membrane pass occupies residues 171–191; it reads LSGFFGSAFLSVAGGAIADIF. At 192–200 the chain is on the cytoplasmic side; that stretch reads DKDQIGIPM. A helical transmembrane segment spans residues 201 to 221; the sequence is AIYTTSAFLGPSLGPIIGGAL. Residues 222-227 lie on the Extracellular side of the membrane; the sequence is YHQSYK. Residues 228-248 form a helical membrane-spanning segment; the sequence is WTFITLLITSGCCLVMIIFTI. At 249-307 the chain is on the cytoplasmic side; that stretch reads PETYKPMLLIRKAKRLRKEKNDQRYYAVLEVTREQTSLLSAIFLSTKRPFGLLLRDRMM. A helical membrane pass occupies residues 308–328; sequence GVLCFYTGLELAIIYLYFVAF. Residues 329 to 342 lie on the Extracellular side of the membrane; the sequence is PYVFKKLYNFGPME. The helical transmembrane segment at 343-363 threads the bilayer; the sequence is IACSYIGIMVGMILSAPTCLL. Over 364–386 the chain is Cytoplasmic; sequence FQKTFEWRVKRNNGVKTPEMRFE. A helical membrane pass occupies residues 387-407; that stretch reads PLFYGAFLTPVGLFIFAFTCY. The Extracellular portion of the chain corresponds to 408–412; sequence KHVHW. Residues 413-433 traverse the membrane as a helical segment; it reads IAPIIGSAIFGSGVYFVFTGV. Topologically, residues 434–447 are cytoplasmic; that stretch reads FAYTVDAYRRYAAS. The helical transmembrane segment at 448-468 threads the bilayer; it reads GMACNTFVRCIMAGVFPLFGL. At 469–477 the chain is on the extracellular side; that stretch reads QMYKSMGVN. A helical membrane pass occupies residues 478–498; it reads WAGFLLAMVTVAMIPVPFLFT. At 499 to 514 the chain is on the cytoplasmic side; it reads KYGARLRAKSPYAWDD.

It belongs to the major facilitator superfamily. CAR1 family.

The protein resides in the membrane. Probable drug/proton antiporter. The protein is Probable drug/proton antiporter YHK8 (YHK8) of Saccharomyces cerevisiae (strain ATCC 204508 / S288c) (Baker's yeast).